A 244-amino-acid polypeptide reads, in one-letter code: MSDWMPIAKEYDPLKAGSIDGTDEDPHDRAVWRAMLARYVPNKGVTGDPLLTLFVARLNSQTKEEKLKEVFSRYGDIRRLRLVRDLVTGFSKGYAFIEYKEERALLKAYRDADGLVIDQHEIFVDYELERTLRGWIPRRLGGGLGGKKESGQLRFGGRDRPFRKPINLPVVKNEPHREGKRERRERSRSRDRHWDPRPRERDHDRGREKHWQDRARVWPENDWEREREFRDERAKTRDKRDRSK.

Residues 51–129 (LTLFVARLNS…HEIFVDYELE (79 aa)) form the RRM domain. Over residues 146–162 (GKKESGQLRFGGRDRPF) the composition is skewed to basic and acidic residues. The disordered stretch occupies residues 146-244 (GKKESGQLRF…KTRDKRDRSK (99 aa)). K172 is covalently cross-linked (Glycyl lysine isopeptide (Lys-Gly) (interchain with G-Cter in SUMO2)). Composition is skewed to basic and acidic residues over residues 173 to 185 (NEPHREGKRERRE) and 192 to 244 (RHWD…DRSK).

In terms of assembly, component of the U11/U12 snRNPs that are part of the U12-type spliceosome.

The protein localises to the nucleus. The chain is U11/U12 small nuclear ribonucleoprotein 35 kDa protein (Snrnp35) from Rattus norvegicus (Rat).